The chain runs to 276 residues: Carboxysome assembly protein CcmO (276 aa).

BMC domains are found at residues 16–100 and 120–204; these read ALGV…AVLP and AIGL…DSLP. Disordered stretches follow at residues 200–219 and 252–276; these read MDSL…LQLP and QSAL…RDDQ.

This sequence belongs to the bacterial microcompartments protein family. As to quaternary structure, homooligomerizes, possibly as a trimer, interacts with CcmK2 in the carboxysome.

Its subcellular location is the carboxysome. Required for formation of the carboxysome, a polyhedral inclusion where RuBisCO (ribulose bisphosphate carboxylase, rbcL-rbcS) is sequestered. Required for recruitment of major shell protein CcmK2 to the pre-carboxysome. Suggested to be a carboxysome shell protein, but it is not detected in gels, mass spectrometry or by protein sequencing. Its function is as follows. Beta-carboxysome assembly initiates when soluble RuBisCO is condensed into a liquid matrix in a pre-carboxysome by the RbcS-like domains of probably both CcmM58 and CcmM35. CcmN interacts with the N-terminus of CcmM58, and then recruits the CcmK2 major shell protein via CcmN's encapsulation peptide. Shell formation requires CcmK proteins and CcmO. CcmL caps the otherwise elongated carboxysome. Once fully encapsulated carboxysomes are formed, they migrate within the cell probably via interactions with the cytoskeleton. This chain is Carboxysome assembly protein CcmO, found in Synechococcus elongatus (strain ATCC 33912 / PCC 7942 / FACHB-805) (Anacystis nidulans R2).